The sequence spans 374 residues: UPF0496 protein At3g28270 (374 aa).

Residues 171 to 210 (KVLTTQFERIKKQQESLLEEVSETRKKIQDEISNLEKKTL) are a coiled coil. Helical transmembrane passes span 214–234 (VVFG…IATG) and 235–255 (VGAA…GWAG). Residues 256–321 (VYTTLDKKKD…MLKLVDNAID (66 aa)) are a coiled coil.

This sequence belongs to the UPF0496 family.

It is found in the membrane. In Arabidopsis thaliana (Mouse-ear cress), this protein is UPF0496 protein At3g28270.